The sequence spans 311 residues: Aspartate carbamoyltransferase catalytic subunit (311 aa).

Carbamoyl phosphate is bound by residues arginine 59 and threonine 60. Lysine 87 provides a ligand contact to L-aspartate. Positions 109, 139, and 142 each coordinate carbamoyl phosphate. Positions 172 and 224 each coordinate L-aspartate. Alanine 265 and proline 266 together coordinate carbamoyl phosphate.

It belongs to the aspartate/ornithine carbamoyltransferase superfamily. ATCase family. In terms of assembly, heterododecamer (2C3:3R2) of six catalytic PyrB chains organized as two trimers (C3), and six regulatory PyrI chains organized as three dimers (R2).

The catalysed reaction is carbamoyl phosphate + L-aspartate = N-carbamoyl-L-aspartate + phosphate + H(+). It participates in pyrimidine metabolism; UMP biosynthesis via de novo pathway; (S)-dihydroorotate from bicarbonate: step 2/3. Its function is as follows. Catalyzes the condensation of carbamoyl phosphate and aspartate to form carbamoyl aspartate and inorganic phosphate, the committed step in the de novo pyrimidine nucleotide biosynthesis pathway. The protein is Aspartate carbamoyltransferase catalytic subunit of Streptococcus pyogenes serotype M4 (strain MGAS10750).